Here is a 370-residue protein sequence, read N- to C-terminus: tRNA-specific 2-thiouridylase MnmA (370 aa).

ATP contacts are provided by residues 24 to 31 (AMSGGVDS) and Leu50. The active-site Nucleophile is Cys118. Cys118 and Cys214 are oxidised to a cystine. Residue Gly142 participates in ATP binding. An interaction with tRNA region spans residues 164-166 (KDQ). The Cysteine persulfide intermediate role is filled by Cys214.

It belongs to the MnmA/TRMU family.

The protein resides in the cytoplasm. The catalysed reaction is S-sulfanyl-L-cysteinyl-[protein] + uridine(34) in tRNA + AH2 + ATP = 2-thiouridine(34) in tRNA + L-cysteinyl-[protein] + A + AMP + diphosphate + H(+). Catalyzes the 2-thiolation of uridine at the wobble position (U34) of tRNA, leading to the formation of s(2)U34. In Ehrlichia ruminantium (strain Welgevonden), this protein is tRNA-specific 2-thiouridylase MnmA.